The primary structure comprises 217 residues: Small ribosomal subunit protein uS3 (217 aa).

Residues 40–110 form the KH type-2 domain; sequence IRDVINKGFN…EVYINIHEVR (71 aa).

The protein belongs to the universal ribosomal protein uS3 family. Part of the 30S ribosomal subunit. Forms a tight complex with proteins S10 and S14.

Its function is as follows. Binds the lower part of the 30S subunit head. Binds mRNA in the 70S ribosome, positioning it for translation. This Rickettsia massiliae (strain Mtu5) protein is Small ribosomal subunit protein uS3.